A 385-amino-acid polypeptide reads, in one-letter code: Linearmycin resistance permease protein LnrN (385 aa).

The next 6 membrane-spanning stretches (helical) occupy residues 22–42 (YLIM…MLSG), 198–218 (AAGF…GTIL), 239–259 (IGAG…GILL), 274–294 (AAVI…GLMI), 305–325 (LAFG…YWPI), and 360–380 (DILG…AAGL). One can recognise an ABC transmembrane type-2 domain in the interval 163–382 (KTVFAKKHED…AITFAAGLKA (220 aa)).

It belongs to the ABC-2 integral membrane protein family. In terms of assembly, the complex is composed of two ATP-binding proteins (LnrL) and two transmembrane proteins (LnrM and LnrN).

The protein localises to the cell membrane. Required for resistance to linearmycins, a family of antibiotic-specialized metabolites produced by some streptomycetes. Part of the ABC transporter complex LnrLMN that probably facilitates linearmycin removal from the membrane. Responsible for the translocation of the substrate across the membrane. Also mediates KinC-dependent biofilm morphology. This chain is Linearmycin resistance permease protein LnrN, found in Bacillus subtilis (strain 168).